A 197-amino-acid polypeptide reads, in one-letter code: MAKMMGPRFKMCRRLGLNVVGHPKAMKRADRGTSRADKKLSDYGIQLLEKQRLRAYYGVMERQFTRYVDQAFNSKEQPGEALLMILESRLDNMVYRMGFASSIRQARQMVNHGHFLVNGKKVNIPSFRLNIGDEVVLREKSRKTEMFVNNFKDSIGSEVPYVSKEEDNFKGIFTRKPKREEIPITIQEQLIVEFYSK.

Residues 88-150 form the S4 RNA-binding domain; sequence SRLDNMVYRM…SRKTEMFVNN (63 aa).

This sequence belongs to the universal ribosomal protein uS4 family. Part of the 30S ribosomal subunit. Contacts protein S5. The interaction surface between S4 and S5 is involved in control of translational fidelity.

Functionally, one of the primary rRNA binding proteins, it binds directly to 16S rRNA where it nucleates assembly of the body of the 30S subunit. In terms of biological role, with S5 and S12 plays an important role in translational accuracy. This is Small ribosomal subunit protein uS4B from Clostridium perfringens (strain ATCC 13124 / DSM 756 / JCM 1290 / NCIMB 6125 / NCTC 8237 / Type A).